The following is a 579-amino-acid chain: Probable serine/threonine-protein kinase kinY (579 aa).

The interval 1–24 (MINGEQTMVEDELPDQGKPMSDES) is disordered. Residues 32 to 309 (LKVGESIGSG…HVLKQLTSLF (278 aa)) enclose the Protein kinase domain. Residues 38–46 (IGSGAYGIV) and Lys-59 contribute to the ATP site. Asp-167 (proton acceptor) is an active-site residue.

This sequence belongs to the protein kinase superfamily. TKL Ser/Thr protein kinase family.

The enzyme catalyses L-seryl-[protein] + ATP = O-phospho-L-seryl-[protein] + ADP + H(+). The catalysed reaction is L-threonyl-[protein] + ATP = O-phospho-L-threonyl-[protein] + ADP + H(+). The polypeptide is Probable serine/threonine-protein kinase kinY (kinY) (Dictyostelium discoideum (Social amoeba)).